A 179-amino-acid chain; its full sequence is SCAN domain-containing protein 1 (179 aa).

The segment at 1-107 (MAATEPILAT…AGSRLGPETF (107 aa)) is disordered. The segment covering 52–80 (SPNAAVPEAIPTPRAAASAALELPLGPAP) has biased composition (low complexity). In terms of domain architecture, SCAN box spans 108 to 166 (RQRFRQFRYQDAAGPREAFRQLRELSRQWLRPDIRTKEQIVEMLVQEQLLAILPEAARA).

In terms of assembly, interacts with ZNF202.

The protein resides in the nucleus. May regulate transcriptional activity. The sequence is that of SCAN domain-containing protein 1 (SCAND1) from Pan paniscus (Pygmy chimpanzee).